A 506-amino-acid polypeptide reads, in one-letter code: Maturase K (506 aa).

Belongs to the intron maturase 2 family. MatK subfamily.

The protein localises to the plastid. The protein resides in the chloroplast. Usually encoded in the trnK tRNA gene intron. Probably assists in splicing its own and other chloroplast group II introns. This Erica tetralix (Cross-leaved heath) protein is Maturase K.